The primary structure comprises 669 residues: Epithelial sodium channel subunit gamma (669 aa).

The Cytoplasmic portion of the chain corresponds to 1 to 67 (MAPPYHGDTR…VVSRGRLRKF (67 aa)). A helical transmembrane segment spans residues 68 to 88 (IWILLTLSAVGLILWQCAELI). Over 89–551 (MSYYTASVSV…VILLSNFGGQ (463 aa)) the chain is Extracellular. Intrachain disulfides connect C113–C300, C223–C231, C277–C284, C389–C474, C411–C470, C415–C466, C424–C451, and C426–C440. The helical transmembrane segment at 552–572 (LGLWMSCSMVCVIEIIEVFFI) threads the bilayer. Over 573–669 (DSFSIVMRRR…LPDTLEGRSH (97 aa)) the chain is Cytoplasmic. Positions 592-619 (DRKAPRPQEPPQVNAPAKEGHDNPVCTD) are disordered.

This sequence belongs to the amiloride-sensitive sodium channel (TC 1.A.6) family. SCNN1G subfamily. As to quaternary structure, component of the heterotrimeric epithelial sodium channel (ENaC) composed of an alpha/SCNN1A, a beta/SCNN1B and a gamma/SCNN1G subunit.

The protein resides in the apical cell membrane. The catalysed reaction is Na(+)(in) = Na(+)(out). Originally identified and characterized by its inhibition by the diuretic drug amiloride. This is one of the three pore-forming subunits of the heterotrimeric epithelial sodium channel (ENaC), a critical regulator of sodium balance and fluid homeostasis. ENaC operates in epithelial tissues, where it mediates the electrodiffusion of sodium ions from extracellular fluid through the apical membrane of cells, with water following osmotically. This Pelodiscus sinensis (Chinese softshell turtle) protein is Epithelial sodium channel subunit gamma.